The following is a 314-amino-acid chain: tRNA dimethylallyltransferase 2 (314 aa).

8 to 15 (GPTGTGKS) lines the ATP pocket. 10 to 15 (TGTGKS) is a binding site for substrate.

The protein belongs to the IPP transferase family. In terms of assembly, monomer. The cofactor is Mg(2+).

The enzyme catalyses adenosine(37) in tRNA + dimethylallyl diphosphate = N(6)-dimethylallyladenosine(37) in tRNA + diphosphate. Catalyzes the transfer of a dimethylallyl group onto the adenine at position 37 in tRNAs that read codons beginning with uridine, leading to the formation of N6-(dimethylallyl)adenosine (i(6)A). In Mycobacterium ulcerans (strain Agy99), this protein is tRNA dimethylallyltransferase 2.